Reading from the N-terminus, the 353-residue chain is tRNA-specific 2-thiouridylase MnmA 2 (353 aa).

ATP is bound by residues A9–S16 and M35. C98 functions as the Nucleophile in the catalytic mechanism. C98 and C194 are joined by a disulfide. ATP is bound at residue G122. The interval K144–Q146 is interaction with tRNA. C194 functions as the Cysteine persulfide intermediate in the catalytic mechanism. The segment at R300–Y301 is interaction with tRNA.

It belongs to the MnmA/TRMU family.

The protein resides in the cytoplasm. It catalyses the reaction S-sulfanyl-L-cysteinyl-[protein] + uridine(34) in tRNA + AH2 + ATP = 2-thiouridine(34) in tRNA + L-cysteinyl-[protein] + A + AMP + diphosphate + H(+). In terms of biological role, catalyzes the 2-thiolation of uridine at the wobble position (U34) of tRNA, leading to the formation of s(2)U34. In Clostridium botulinum (strain Loch Maree / Type A3), this protein is tRNA-specific 2-thiouridylase MnmA 2.